The following is a 367-amino-acid chain: Alanine racemase (367 aa).

Residue lysine 40 is the Proton acceptor; specific for D-alanine of the active site. Residue lysine 40 is modified to N6-(pyridoxal phosphate)lysine. Position 136 (arginine 136) interacts with substrate. Tyrosine 263 serves as the catalytic Proton acceptor; specific for L-alanine. Methionine 310 provides a ligand contact to substrate.

It belongs to the alanine racemase family. Requires pyridoxal 5'-phosphate as cofactor.

It carries out the reaction L-alanine = D-alanine. It participates in amino-acid biosynthesis; D-alanine biosynthesis; D-alanine from L-alanine: step 1/1. In terms of biological role, catalyzes the interconversion of L-alanine and D-alanine. May also act on other amino acids. This is Alanine racemase (alr) from Streptococcus thermophilus (strain CNRZ 1066).